Consider the following 251-residue polypeptide: Octanoyltransferase (251 aa).

A BPL/LPL catalytic domain is found at 49–230; it reads DEIADQILVL…DLDDAFAGRL (182 aa). Residues 87–94, 160–162, and 173–175 each bind substrate; these read RGGRITWH, ALG, and GLA. The active-site Acyl-thioester intermediate is the cysteine 191.

Belongs to the LipB family.

The protein localises to the cytoplasm. The catalysed reaction is octanoyl-[ACP] + L-lysyl-[protein] = N(6)-octanoyl-L-lysyl-[protein] + holo-[ACP] + H(+). Its pathway is protein modification; protein lipoylation via endogenous pathway; protein N(6)-(lipoyl)lysine from octanoyl-[acyl-carrier-protein]: step 1/2. Its function is as follows. Catalyzes the transfer of endogenously produced octanoic acid from octanoyl-acyl-carrier-protein onto the lipoyl domains of lipoate-dependent enzymes. Lipoyl-ACP can also act as a substrate although octanoyl-ACP is likely to be the physiological substrate. In Corynebacterium efficiens (strain DSM 44549 / YS-314 / AJ 12310 / JCM 11189 / NBRC 100395), this protein is Octanoyltransferase.